The sequence spans 469 residues: uncharacterized protein (469 aa).

Transmembrane regions (helical) follow at residues 42–62 (DVIIFLLLFFVAFNVSSAYVI), 179–199 (IVLPPGAVILSPQGTLLVTPS), and 249–269 (NLKYLLIIAIFGTAIFGGLFV).

The protein localises to the cell membrane. This is an uncharacterized protein from Methanocaldococcus jannaschii (strain ATCC 43067 / DSM 2661 / JAL-1 / JCM 10045 / NBRC 100440) (Methanococcus jannaschii).